The chain runs to 372 residues: Solute carrier family 35 member F6 (372 aa).

The N-terminal stretch at 1-18 (MAWTKYQLFLAGLMLVTG) is a signal peptide. 2 helical membrane passes run 48 to 68 (FVQA…FYLL) and 89 to 109 (LLFL…YVAL). Residues 105 to 160 (MYVALNMTSASSFQMLRGAVIIFTGLFSVAFLDRRLAPSQWLGILITIAGLVVVGL) enclose the EamA domain. Asn-110 carries N-linked (GlcNAc...) asparagine glycosylation. Transmembrane regions (helical) follow at residues 116-136 (SFQM…VAFL), 145-165 (WLGI…DLLS), 176-196 (VITG…QMVL), 211-231 (AVGI…VPMF), 261-281 (LIAL…FSGI), 293-312 (MVLD…ALGW), and 320-336 (ILGF…YNGL). The residue at position 366 (Thr-366) is a Phosphothreonine.

It belongs to the SLC35F solute transporter family. In terms of assembly, interacts with SLC25A5.

The protein resides in the mitochondrion. The protein localises to the lysosome membrane. Functionally, involved in the maintenance of mitochondrial membrane potential in pancreatic ductal adenocarcinoma (PDAC) cells. Promotes pancreatic ductal adenocarcinoma (PDAC) cell growth. May play a role as a nucleotide-sugar transporter. This is Solute carrier family 35 member F6 (Slc35f6) from Mus musculus (Mouse).